Here is a 408-residue protein sequence, read N- to C-terminus: Voltage-gated potassium channel subunit beta-1 (408 aa).

NADP(+) contacts are provided by Thr97, Trp98, Gln104, and Asp126. Catalysis depends on Tyr131, which acts as the Proton donor/acceptor. Residues Asn199, Ser229, Arg230, Gln255, Trp284, Ser285, Pro286, Leu287, Ala288, Cys289, Lys295, Arg305, Gly364, Ser366, Gln370, Glu373, and Asn374 each coordinate NADP(+).

Belongs to the shaker potassium channel beta subunit family. Homotetramer. Interaction with tetrameric potassium channel alpha subunits gives rise to a heterooctamer. Identified in potassium channel complexes containing KCNA1, KCNA2, KCNA4, KCNA5, KCNA6, KCNAB1 and KCNAB2. Part of a complex containing KCNA1, KCNA4 and LGI1; interaction with LGI1 inhibits down-regulation of KCNA1 channel activity. Interacts with the dimer formed by GNB1 and GNG2; this enhances KCNA1 binding. Interacts with SQSTM1. As to expression, expression most abundant in aorta. Also high in left ventricle. Also detected in right ventricle, atrium, brain, skeletal muscle and kidney. Not detected in liver.

The protein localises to the cytoplasm. It is found in the membrane. Its subcellular location is the cell membrane. The catalysed reaction is a primary alcohol + NADP(+) = an aldehyde + NADPH + H(+). It catalyses the reaction a secondary alcohol + NADP(+) = a ketone + NADPH + H(+). Functionally, regulatory subunit of the voltage-gated potassium (Kv) Shaker channels composed of pore-forming and potassium-conducting alpha subunits and of regulatory beta subunits. The beta-1/KCNAB1 cytoplasmic subunit mediates closure of delayed rectifier potassium channels by physically obstructing the pore via its N-terminal domain and increases the speed of channel closure for other family members. Promotes the inactivation of Kv1.1/KCNA1, Kv1.2/KCNA2, Kv1.4/KCNA4, Kv1.5/KCNA5 and Kv1.6/KCNA6 alpha subunit-containing channels. Displays nicotinamide adenine dinucleotide phosphate (NADPH)-dependent aldoketoreductase activity by catalyzing the NADPH-dependent reduction of a variety of endogenous aldehydes and ketones. The binding of NADPH is required for efficient down-regulation of potassium channel activity. Oxidation of the bound NADPH restrains N-terminal domain from blocking the channel, thereby decreasing N-type inactivation of potassium channel activity. The protein is Voltage-gated potassium channel subunit beta-1 (KCNAB1) of Mustela putorius (European polecat).